We begin with the raw amino-acid sequence, 137 residues long: Large ribosomal subunit protein uL16 (137 aa).

The protein belongs to the universal ribosomal protein uL16 family. Part of the 50S ribosomal subunit.

Its function is as follows. Binds 23S rRNA and is also seen to make contacts with the A and possibly P site tRNAs. The chain is Large ribosomal subunit protein uL16 from Alkalilimnicola ehrlichii (strain ATCC BAA-1101 / DSM 17681 / MLHE-1).